Consider the following 197-residue polypeptide: ADP-ribosylation factor-like protein 6-interacting protein 1 (197 aa).

Helical transmembrane passes span 43–63 (VVFG…LSLI), 64–84 (TLLS…PMVS), 129–149 (TVFV…GAII), and 150–170 (NNLL…GLQN).

This sequence belongs to the ARL6ip family.

The protein resides in the membrane. The sequence is that of ADP-ribosylation factor-like protein 6-interacting protein 1 from Drosophila melanogaster (Fruit fly).